Consider the following 532-residue polypeptide: Muscarinic acetylcholine receptor M5 (532 aa).

Residues 1–29 (MEGESYHNETTVNGTPVNHQALERHGLWE) lie on the Extracellular side of the membrane. Residue Asn-8 is glycosylated (N-linked (GlcNAc...) asparagine). A helical transmembrane segment spans residues 30 to 53 (VITIAAVTAVVSLMTIVGNVLVMI). Residues 54 to 66 (SFKVNSQLKTVNN) lie on the Cytoplasmic side of the membrane. A helical membrane pass occupies residues 67–87 (YYLLSLACADLIIGIFSMNLY). Topologically, residues 88–104 (TTYILMGRWVLGSLACD) are extracellular. Residues Cys-103 and Cys-183 are joined by a disulfide bond. Residues 105 to 126 (LWLALDYVASNASVMNLLVISF) traverse the membrane as a helical segment. At 127–146 (DRYFSITRPLTYRAKRTPKR) the chain is on the cytoplasmic side. The helical transmembrane segment at 147–169 (AGIMIGLAWLVSFILWAPAILCW) threads the bilayer. Over 170–191 (QYLVGKRTVPPDECQIQFLSEP) the chain is Extracellular. Residues 192–214 (TITFGTAIAAFYIPVSVMTILYC) form a helical membrane-spanning segment. The Cytoplasmic segment spans residues 215–443 (RIYRETEKRT…LVKERKAAQT (229 aa)). The segment at 265 to 290 (VRNQASWSSSRRSTSTTGKPTQATDL) is disordered. Over residues 270 to 281 (SWSSSRRSTSTT) the composition is skewed to low complexity. Residues 444 to 464 (LSAILLAFIITWTPYNIMVLV) form a helical membrane-spanning segment. Topologically, residues 465-478 (STFCDKCVPVTLWH) are extracellular. The chain crosses the membrane as a helical span at residues 479 to 498 (LGYWLCYVNSTINPICYALC). Residues 499–532 (NRTFRKTFKLLLLCRWKKKKVEEKLYWQGNSKLP) are Cytoplasmic-facing. A phosphothreonine mark is found at Thr-501 and Thr-505.

Belongs to the G-protein coupled receptor 1 family. Muscarinic acetylcholine receptor subfamily. CHRM5 sub-subfamily.

Its subcellular location is the cell membrane. It is found in the postsynaptic cell membrane. The muscarinic acetylcholine receptor mediates various cellular responses, including inhibition of adenylate cyclase, breakdown of phosphoinositides and modulation of potassium channels through the action of G proteins. Primary transducing effect is Pi turnover. The protein is Muscarinic acetylcholine receptor M5 (Chrm5) of Mus musculus (Mouse).